The chain runs to 367 residues: MMLTALGLMSGTSLDGVDVALIETDGKQVKAFGPSGYRPYSPVERNLLRQALSEAVHLTRRDARPGILAEAERAVTQAHAEAVAAFVAQNRMRPEDIDIVGFHGQTVLHRPEKRLTVQIGDAPALARAIHIPVMHDFRAADVEAGGQGAPFVPVYHRALAQSLEREGPIVVVNIGGVSNITYIDGNDTLIACDTGPGNALLDDFMYRTMNQAFDTEGKFAALGTADEAWIARALELPFFALPPPKSLDRNDFAALKLGDVPPAVGAATLTAFTAAAIARIIPLLPRRPRSWIVCGGGARNLTMLRMLRERVGSATVEAAEALGWASDAIEAQAFGFLAARGLKGLPLSYPATTGVPMPMTGGVIARP.

Position 11 to 18 (11 to 18 (GTSLDGVD)) interacts with ATP.

It belongs to the anhydro-N-acetylmuramic acid kinase family.

The catalysed reaction is 1,6-anhydro-N-acetyl-beta-muramate + ATP + H2O = N-acetyl-D-muramate 6-phosphate + ADP + H(+). The protein operates within amino-sugar metabolism; 1,6-anhydro-N-acetylmuramate degradation. It functions in the pathway cell wall biogenesis; peptidoglycan recycling. Functionally, catalyzes the specific phosphorylation of 1,6-anhydro-N-acetylmuramic acid (anhMurNAc) with the simultaneous cleavage of the 1,6-anhydro ring, generating MurNAc-6-P. Is required for the utilization of anhMurNAc either imported from the medium or derived from its own cell wall murein, and thus plays a role in cell wall recycling. The chain is Anhydro-N-acetylmuramic acid kinase from Bradyrhizobium diazoefficiens (strain JCM 10833 / BCRC 13528 / IAM 13628 / NBRC 14792 / USDA 110).